Consider the following 207-residue polypeptide: Probable RNA 2'-phosphotransferase (207 aa).

Belongs to the KptA/TPT1 family.

Removes the 2'-phosphate from RNA via an intermediate in which the phosphate is ADP-ribosylated by NAD followed by a presumed transesterification to release the RNA and generate ADP-ribose 1''-2''-cyclic phosphate (APPR&gt;P). May function as an ADP-ribosylase. The protein is Probable RNA 2'-phosphotransferase of Methanosarcina mazei (strain ATCC BAA-159 / DSM 3647 / Goe1 / Go1 / JCM 11833 / OCM 88) (Methanosarcina frisia).